Here is a 573-residue protein sequence, read N- to C-terminus: Excitatory amino acid transporter 2 (573 aa).

The segment covering 1–11 (MASTEGANNMP) has biased composition (polar residues). The segment at 1-29 (MASTEGANNMPKQVEVRMHDSHLSSEEPK) is disordered. The Cytoplasmic portion of the chain corresponds to 1–44 (MASTEGANNMPKQVEVRMHDSHLSSEEPKHRNLGMRMCDKLGKN). S3, S21, S24, and S25 each carry phosphoserine. The segment covering 14–29 (VEVRMHDSHLSSEEPK) has biased composition (basic and acidic residues). A lipid anchor (S-palmitoyl cysteine) is attached at C38. A run of 3 helical transmembrane segments spans residues 45-64 (LLLS…GGLL), 88-108 (MLKM…LSGL), and 121-142 (MVYY…VLAI). Residues N205 and N215 are each glycosylated (N-linked (GlcNAc...) asparagine). Helical transmembrane passes span 235–258 (FKDG…MGKM), 268–295 (FFNI…ACLI), and 317–338 (ITVI…YFVV). Positions 344-374 (FSFFAGIFQAWITALGTASSAGTLPVTFRCL) form an intramembrane region, discontinuously helical. L-aspartate is bound at residue 361-363 (ASS). Residues 384–410 (VTRFVLPVGATINMDGTALYEAVAAIF) form a helical membrane-spanning segment. Residues G392, T394, and N396 each coordinate Na(+). Residues T400, 441-445 (IPSAG), D474, and N481 each bind L-aspartate. Positions 424 to 457 (IVTVSLTATLASIGAASIPSAGLVTMLLILTAVG) form an intramembrane region, discontinuously helical. A helical transmembrane segment spans residues 471 to 492 (WLLDRMRTSVNVVGDSFGAGIV). Residues N481 and D485 each coordinate Na(+). S505, S520, S531, and S533 each carry phosphoserine. Position 538 is a phosphotyrosine (Y538). A phosphoserine mark is found at S543, S559, and S563.

The protein belongs to the dicarboxylate/amino acid:cation symporter (DAACS) (TC 2.A.23) family. SLC1A2 subfamily. In terms of assembly, homotrimer. Interacts with AJUBA. Glycosylated. Post-translationally, palmitoylation at Cys-38 is not required for correct subcellular localization, but is important for glutamate uptake activity. As to expression, localized in brain and is highly enriched in the Purkinje cell layer in cerebellum.

Its subcellular location is the cell membrane. The catalysed reaction is K(+)(in) + L-glutamate(out) + 3 Na(+)(out) + H(+)(out) = K(+)(out) + L-glutamate(in) + 3 Na(+)(in) + H(+)(in). The enzyme catalyses D-aspartate(out) + K(+)(in) + 3 Na(+)(out) + H(+)(out) = D-aspartate(in) + K(+)(out) + 3 Na(+)(in) + H(+)(in). It catalyses the reaction K(+)(in) + L-aspartate(out) + 3 Na(+)(out) + H(+)(out) = K(+)(out) + L-aspartate(in) + 3 Na(+)(in) + H(+)(in). Functionally, sodium-dependent, high-affinity amino acid transporter that mediates the uptake of L-glutamate and also L-aspartate and D-aspartate. Functions as a symporter that transports one amino acid molecule together with two or three Na(+) ions and one proton, in parallel with the counter-transport of one K(+) ion. Mediates Cl(-) flux that is not coupled to amino acid transport; this avoids the accumulation of negative charges due to aspartate and Na(+) symport. Essential for the rapid removal of released glutamate from the synaptic cleft, and for terminating the postsynaptic action of glutamate. This Rattus norvegicus (Rat) protein is Excitatory amino acid transporter 2 (Slc1a2).